Here is a 1013-residue protein sequence, read N- to C-terminus: Trehalose monomycolate exporter MmpL3 (1013 aa).

Topologically, residues 1 to 14 are cytoplasmic; sequence MFAWWGRTVYQFRY. Residues 15–35 form a helical membrane-spanning segment; sequence IVIGVMVALCLGGGVYGISLG. The Periplasmic segment spans residues 36 to 196; it reads NHVTQSGFYD…KRAEVAAIPL (161 aa). Residue 40-44 participates in a 1,2-diacylglycero-3-phosphoethanolamine binding; the sequence is QSGFY. The next 2 helical transmembrane spans lie at 197 to 217 and 218 to 238; these read VAVVLFFVFGTVIAAALPAII and GGLAIAGALGIMRLVAEFTPV. Residues 239–240 are Periplasmic-facing; it reads HF. A helical membrane pass occupies residues 241 to 261; the sequence is FAQPVVTLIGLGIAIDYGLFI. Over 262-290 the chain is Cytoplasmic; the sequence is VSRFREEIAEGYDTEAAVRRTVMTSGRTV. Residues 291-311 traverse the membrane as a helical segment; sequence VFSAVIIVASSVPLLLFPQGF. Residues 312–317 are Periplasmic-facing; it reads LKSITY. Residues 318–338 form a helical membrane-spanning segment; the sequence is AIIASVMLAAILSITVLAAAL. At 339-401 the chain is on the cytoplasmic side; sequence AILGPRVDAL…RLVNVVMKRP (63 aa). Residues 402-422 traverse the membrane as a helical segment; sequence IAFAAPILVVMVLLIIPLGQL. Over 423–567 the chain is Periplasmic; sequence SLGGISEKYL…HSLFDKLPLM (145 aa). Residues 485–513 form a disordered region; sequence SGFTDPDNDPEKMWKERPANDSGSKDPSV. Over residues 493–512 the composition is skewed to basic and acidic residues; the sequence is DPEKMWKERPANDSGSKDPS. Residues 568 to 588 traverse the membrane as a helical segment; that stretch reads ALILIVTTTVLMFLAFGSVVL. Residues 589 to 591 lie on the Cytoplasmic side of the membrane; sequence PIK. The chain crosses the membrane as a helical span at residues 592–612; sequence AALMSALTLGSTMGILTWMFV. The Periplasmic segment spans residues 613–630; it reads DGHGSGLMNYTPQPLMAP. The chain crosses the membrane as a helical span at residues 631–651; the sequence is MIGLIIAVIWGLSTDYEVFLV. Residue D645 coordinates SQ109. Residues 652–678 lie on the Cytoplasmic side of the membrane; it reads SRMVEARERGMSTAEAIRIGTATTGRL. Residues 679–699 form a helical membrane-spanning segment; sequence ITGAALILAVVAGAFVFSDLV. The Periplasmic segment spans residues 700–703; the sequence is MMKY. The helical transmembrane segment at 704–724 threads the bilayer; sequence LAFGLLIALLLDATIIRMFLV. Over 725–1013 the chain is Cytoplasmic; the sequence is PAVMKLLGDD…QDLLRREGRL (289 aa). A disordered region spans residues 754 to 1013; it reads TELPDERKRP…QDLLRREGRL (260 aa). A compositionally biased stretch (basic and acidic residues) spans 757–772; it reads PDERKRPTVRESETDQ. Pro residues-rich tracts occupy residues 792-803 and 820-829; these read HPAPEPVRPMPP and PPQPPQPPQA. The span at 842–867 shows a compositional bias: low complexity; sequence RFAMARNAVRNAVNSAVHGGAGSAAA. Positions 875–885 are enriched in pro residues; that stretch reads PGGPAQPPAPP. Over residues 973–996 the composition is skewed to basic and acidic residues; that stretch reads REQEPSTEKLNTREDAPEDPETKR.

It belongs to the resistance-nodulation-cell division (RND) (TC 2.A.6) family. MmpL subfamily. Monomer. Interacts with TtfA (via N-terminus); active trehalose monomycolate (TMM) biosynthesis is not required for the complex formation. Interacts with MSMEG_5308.

It is found in the cell inner membrane. The protein localises to the cell septum. The protein resides in the cell tip. Its activity is regulated as follows. Inhibited by the antimycobacterial compound BM212, a pyrrole derivative. Inhibited by the antitubercular drug SQ109. Inhibited by the adamantyl urea derivative AU1235, the indole carboxamide ICA38 and rimonabant, the antagonist for the cannabinoid receptor CB1. The dissociation constant (Kd) values for SQ109, AU1235, ICA38 and rimonabant are 1.65 uM, 0.29, 0.16 and 29.5, respectively. Inhibitory effects are due to binding of the inhibitors at the proton-transportation channel most likely dissipating the transmembrane electrochemical proton gradient needed for substrate translocation. Transports trehalose monomycolate (TMM) to the cell wall. Flips TMM across the inner membrane. Membrane potential is not required for this function. Transports probably phosphatidylethanolamine (PE) as well. Binds specifically both TMM and PE, but not trehalose dimycolate (TDM). Also binds diacylglycerol (DAG) and other phospholipids, including phosphatidylglycerol (PG), phosphatidylinositol (PI), and cardiolipin (CDL). Contributes to membrane potential, cell wall composition, antibiotic susceptibility and fitness. In Mycolicibacterium smegmatis (strain ATCC 700084 / mc(2)155) (Mycobacterium smegmatis), this protein is Trehalose monomycolate exporter MmpL3.